Here is a 244-residue protein sequence, read N- to C-terminus: Purine nucleoside phosphorylase HI_0175 (244 aa).

The Zn(2+) site is built by histidine 70, cysteine 105, and histidine 122.

This sequence belongs to the purine nucleoside phosphorylase YfiH/LACC1 family. As to quaternary structure, homodimer. Requires Cu(2+) as cofactor. Zn(2+) is required as a cofactor.

The enzyme catalyses adenosine + phosphate = alpha-D-ribose 1-phosphate + adenine. The catalysed reaction is S-methyl-5'-thioadenosine + phosphate = 5-(methylsulfanyl)-alpha-D-ribose 1-phosphate + adenine. It catalyses the reaction inosine + phosphate = alpha-D-ribose 1-phosphate + hypoxanthine. It carries out the reaction adenosine + H2O + H(+) = inosine + NH4(+). Its function is as follows. Purine nucleoside enzyme that catalyzes the phosphorolysis of adenosine and inosine nucleosides, yielding D-ribose 1-phosphate and the respective free bases, adenine and hypoxanthine. Also catalyzes the phosphorolysis of S-methyl-5'-thioadenosine into adenine and S-methyl-5-thio-alpha-D-ribose 1-phosphate. Also has adenosine deaminase activity. This is Purine nucleoside phosphorylase HI_0175 from Haemophilus influenzae (strain ATCC 51907 / DSM 11121 / KW20 / Rd).